The chain runs to 202 residues: 3-isopropylmalate dehydratase small subunit (202 aa).

The protein belongs to the LeuD family. LeuD type 1 subfamily. Heterodimer of LeuC and LeuD.

The enzyme catalyses (2R,3S)-3-isopropylmalate = (2S)-2-isopropylmalate. The protein operates within amino-acid biosynthesis; L-leucine biosynthesis; L-leucine from 3-methyl-2-oxobutanoate: step 2/4. Its function is as follows. Catalyzes the isomerization between 2-isopropylmalate and 3-isopropylmalate, via the formation of 2-isopropylmaleate. The sequence is that of 3-isopropylmalate dehydratase small subunit from Nocardia farcinica (strain IFM 10152).